The primary structure comprises 201 residues: dTTP/UTP pyrophosphatase (201 aa).

The active-site Proton acceptor is the Asp81.

It belongs to the Maf family. YhdE subfamily. A divalent metal cation serves as cofactor.

The protein resides in the cytoplasm. It catalyses the reaction dTTP + H2O = dTMP + diphosphate + H(+). The enzyme catalyses UTP + H2O = UMP + diphosphate + H(+). Nucleoside triphosphate pyrophosphatase that hydrolyzes dTTP and UTP. May have a dual role in cell division arrest and in preventing the incorporation of modified nucleotides into cellular nucleic acids. The polypeptide is dTTP/UTP pyrophosphatase (Bordetella avium (strain 197N)).